The chain runs to 329 residues: 4-hydroxythreonine-4-phosphate dehydrogenase (329 aa).

Positions 136 and 137 each coordinate substrate. Residues His166, His211, and His266 each coordinate a divalent metal cation. Lys274, Asn283, and Arg292 together coordinate substrate.

The protein belongs to the PdxA family. As to quaternary structure, homodimer. Zn(2+) is required as a cofactor. It depends on Mg(2+) as a cofactor. The cofactor is Co(2+).

Its subcellular location is the cytoplasm. The catalysed reaction is 4-(phosphooxy)-L-threonine + NAD(+) = 3-amino-2-oxopropyl phosphate + CO2 + NADH. The protein operates within cofactor biosynthesis; pyridoxine 5'-phosphate biosynthesis; pyridoxine 5'-phosphate from D-erythrose 4-phosphate: step 4/5. Functionally, catalyzes the NAD(P)-dependent oxidation of 4-(phosphooxy)-L-threonine (HTP) into 2-amino-3-oxo-4-(phosphooxy)butyric acid which spontaneously decarboxylates to form 3-amino-2-oxopropyl phosphate (AHAP). The polypeptide is 4-hydroxythreonine-4-phosphate dehydrogenase (Shigella boydii serotype 4 (strain Sb227)).